A 150-amino-acid polypeptide reads, in one-letter code: Globin-2 A chain (150 aa).

The residue at position 2 (valine 2) is a Blocked amino end (Val). Residues 10 to 150 (CGSEAIKANL…ALVGVVQAAL (141 aa)) enclose the Globin domain. Histidine 102 serves as a coordination point for heme b.

It belongs to the globin family. Heterotetramer of two alpha chains and two beta chains.

This is Globin-2 A chain from Anadara inaequivalvis (Inequivalve ark).